Reading from the N-terminus, the 379-residue chain is Cobalt-precorrin-5B C(1)-methyltransferase (379 aa).

This sequence belongs to the CbiD family.

It carries out the reaction Co-precorrin-5B + S-adenosyl-L-methionine = Co-precorrin-6A + S-adenosyl-L-homocysteine. It participates in cofactor biosynthesis; adenosylcobalamin biosynthesis; cob(II)yrinate a,c-diamide from sirohydrochlorin (anaerobic route): step 6/10. Functionally, catalyzes the methylation of C-1 in cobalt-precorrin-5B to form cobalt-precorrin-6A. The polypeptide is Cobalt-precorrin-5B C(1)-methyltransferase (Salmonella paratyphi A (strain ATCC 9150 / SARB42)).